The primary structure comprises 193 residues: Ferredoxin-2, mitochondrial (193 aa).

The tract at residues 38-70 is disordered; the sequence is QATPEKLETSNEEEGSSSAQITAGVESDAENQR. Residues 78–180 form the 2Fe-2S ferredoxin-type domain; that stretch reads VEVVFLDRSG…GAEFTLPKIT (103 aa). The [2Fe-2S] cluster site is built by cysteine 115, cysteine 121, cysteine 124, and cysteine 161.

Belongs to the adrenodoxin/putidaredoxin family. In terms of assembly, component of the mitochondrial core iron-sulfur cluster (ISC) complex composed of NFS1, LYRM4, NDUFAB1, ISCU, FXN, and FDX2; this complex is a heterohexamer containing two copies of each monomer. [2Fe-2S] cluster is required as a cofactor.

The protein localises to the mitochondrion. Its subcellular location is the mitochondrion matrix. In terms of biological role, electron donor, of the core iron-sulfur cluster (ISC) assembly complex, that acts to reduce the persulfide into sulfide during [2Fe-2S] clusters assembly on the scaffolding protein ISCU. The core iron-sulfur cluster (ISC) assembly complex is involved in the de novo synthesis of a [2Fe-2S] cluster, the first step of the mitochondrial iron-sulfur protein biogenesis. This process is initiated by the cysteine desulfurase complex (NFS1:LYRM4:NDUFAB1) that produces persulfide which is delivered on the scaffold protein ISCU in a FXN-dependent manner. Then this complex is stabilized by FDX2 which provides reducing equivalents to accomplish the [2Fe-2S] cluster assembly. Finally, the [2Fe-2S] cluster is transferred from ISCU to chaperone proteins, including HSCB, HSPA9 and GLRX5. Essential for coenzyme Q biosynthesis: together with FDXR, transfers the electrons required for the hydroxylation reaction performed by COQ6. The chain is Ferredoxin-2, mitochondrial from Xenopus laevis (African clawed frog).